The following is a 478-amino-acid chain: TFIIA-alpha and beta-like factor (478 aa).

Residues 309-427 (VKQPRNIEEP…SGDDVSEQDV (119 aa)) form a disordered region. A compositionally biased stretch (polar residues) spans 390–401 (SISNEDSATNSS). Acidic residues predominate over residues 411–427 (VEEDPLNSGDDVSEQDV).

It belongs to the TFIIA subunit 1 family. In terms of tissue distribution, testis specific. Detected in adult testis mostly in round and elongating spermatids (at protein level). Detected in testis.

The protein localises to the nucleus. May function as a testis specific transcription factor. Binds DNA in conjunction with GTF2A2 and TBP (the TATA-binding protein) and together with GTF2A2, allows mRNA transcription. The protein is TFIIA-alpha and beta-like factor (GTF2A1L) of Homo sapiens (Human).